Reading from the N-terminus, the 186-residue chain is NADH dehydrogenase [ubiquinone] 1 beta subcomplex subunit 8, mitochondrial (186 aa).

The N-terminal 28 residues, 1 to 28, are a transit peptide targeting the mitochondrion; the sequence is MAVARAGVLGVQWLQRASWNVMPLGART. The chain crosses the membrane as a helical span at residues 133–153; the sequence is LFGFLAFMIFMCWVGEVYPVY.

Belongs to the complex I NDUFB8 subunit family. In terms of assembly, complex I is composed of 45 different subunits.

The protein resides in the mitochondrion inner membrane. In terms of biological role, accessory subunit of the mitochondrial membrane respiratory chain NADH dehydrogenase (Complex I), that is believed not to be involved in catalysis. Complex I functions in the transfer of electrons from NADH to the respiratory chain. The immediate electron acceptor for the enzyme is believed to be ubiquinone. The protein is NADH dehydrogenase [ubiquinone] 1 beta subcomplex subunit 8, mitochondrial (NDUFB8) of Pongo abelii (Sumatran orangutan).